Consider the following 129-residue polypeptide: Glycine cleavage system H protein (129 aa).

One can recognise a Lipoyl-binding domain in the interval 24 to 106; it reads TYTVGITEHA…YAGGWIFKIK (83 aa). N6-lipoyllysine is present on K65.

The protein belongs to the GcvH family. The glycine cleavage system is composed of four proteins: P, T, L and H. It depends on (R)-lipoate as a cofactor.

The glycine cleavage system catalyzes the degradation of glycine. The H protein shuttles the methylamine group of glycine from the P protein to the T protein. The polypeptide is Glycine cleavage system H protein (Escherichia fergusonii (strain ATCC 35469 / DSM 13698 / CCUG 18766 / IAM 14443 / JCM 21226 / LMG 7866 / NBRC 102419 / NCTC 12128 / CDC 0568-73)).